Consider the following 353-residue polypeptide: Protein RecA (353 aa).

An ATP-binding site is contributed by 75–82; the sequence is GPESSGKT.

This sequence belongs to the RecA family.

The protein localises to the cytoplasm. Functionally, can catalyze the hydrolysis of ATP in the presence of single-stranded DNA, the ATP-dependent uptake of single-stranded DNA by duplex DNA, and the ATP-dependent hybridization of homologous single-stranded DNAs. It interacts with LexA causing its activation and leading to its autocatalytic cleavage. This is Protein RecA from Cupriavidus pinatubonensis (strain JMP 134 / LMG 1197) (Cupriavidus necator (strain JMP 134)).